Consider the following 275-residue polypeptide: Light-independent protochlorophyllide reductase iron-sulfur ATP-binding protein (275 aa).

Residues 12–17 (GIGKST) and Lys41 contribute to the ATP site. Mg(2+) is bound at residue Ser16. The [4Fe-4S] cluster site is built by Cys97 and Cys131. 182 to 183 (NR) serves as a coordination point for ATP.

Belongs to the NifH/BchL/ChlL family. As to quaternary structure, homodimer. Protochlorophyllide reductase is composed of three subunits; BchL, BchN and BchB. It depends on [4Fe-4S] cluster as a cofactor.

It carries out the reaction chlorophyllide a + oxidized 2[4Fe-4S]-[ferredoxin] + 2 ADP + 2 phosphate = protochlorophyllide a + reduced 2[4Fe-4S]-[ferredoxin] + 2 ATP + 2 H2O. It participates in porphyrin-containing compound metabolism; bacteriochlorophyll biosynthesis (light-independent). Functionally, component of the dark-operative protochlorophyllide reductase (DPOR) that uses Mg-ATP and reduced ferredoxin to reduce ring D of protochlorophyllide (Pchlide) to form chlorophyllide a (Chlide). This reaction is light-independent. The L component serves as a unique electron donor to the NB-component of the complex, and binds Mg-ATP. In Chlorobium limicola (strain DSM 245 / NBRC 103803 / 6330), this protein is Light-independent protochlorophyllide reductase iron-sulfur ATP-binding protein.